Reading from the N-terminus, the 468-residue chain is Probable citrate synthase, mitochondrial (468 aa).

Catalysis depends on residues His303, His349, and Asp404.

The protein belongs to the citrate synthase family. In terms of assembly, homodimer.

It is found in the mitochondrion matrix. The catalysed reaction is oxaloacetate + acetyl-CoA + H2O = citrate + CoA + H(+). It participates in carbohydrate metabolism; tricarboxylic acid cycle; isocitrate from oxaloacetate: step 1/2. The protein is Probable citrate synthase, mitochondrial (cts-1) of Caenorhabditis elegans.